The primary structure comprises 287 residues: Putative ankyrin repeat protein R791 (287 aa).

7 ANK repeats span residues 40–71, 76–105, 107–134, 135–164, 165–194, 196–224, and 225–254; these read HNFN…PLVF, NVHD…NIET, NDDV…IDNK, TIFE…DIKA, KDNF…TIDI, DDTY…DYRT, and VDDL…DIEA.

The sequence is that of Putative ankyrin repeat protein R791 from Acanthamoeba polyphaga (Amoeba).